The following is a 447-amino-acid chain: Phosphoglucosamine mutase (447 aa).

Ser-102 functions as the Phosphoserine intermediate in the catalytic mechanism. 4 residues coordinate Mg(2+): Ser-102, Asp-241, Asp-243, and Asp-245. At Ser-102 the chain carries Phosphoserine.

The protein belongs to the phosphohexose mutase family. It depends on Mg(2+) as a cofactor. Activated by phosphorylation.

The catalysed reaction is alpha-D-glucosamine 1-phosphate = D-glucosamine 6-phosphate. Catalyzes the conversion of glucosamine-6-phosphate to glucosamine-1-phosphate. The chain is Phosphoglucosamine mutase from Delftia acidovorans (strain DSM 14801 / SPH-1).